Consider the following 499-residue polypeptide: NADH-quinone oxidoreductase subunit N (499 aa).

14 consecutive transmembrane segments (helical) span residues 16–36 (AAFSMSVVGGVGLAMIVLDAF), 42–62 (AIPWLGVAALGVSAVWEITHL), 77–97 (GGFVAFINLIILLTGLATILL), 109–129 (YGEVYALIMFCTVGMIMLGSA), 133–153 (VSIFLGLETMSVCLYVLTGFI), 167–187 (FLLGAFSTGFFLYGIALMYGA), 208–228 (LLFWGGFALFLVGFFFKVSAA), 252–272 (ATKAAAFAALILVLVHAVPGG), 274–294 (WQLSVAAVAVLTMVIGNVMAL), 302–322 (LLAYSSIAHAGYLLVGLSAGT), 327–347 (AGALFYLLVYAVMNIGAFGVM), 376–396 (GSTMGVFMLSLIGFPPLGGFI), 411–433 (TWLVVIGVLMSALSAYYYLRVVY), and 463–483 (GTLVVCAVALVVLGVFFGGVL).

Belongs to the complex I subunit 2 family. As to quaternary structure, NDH-1 is composed of 14 different subunits. Subunits NuoA, H, J, K, L, M, N constitute the membrane sector of the complex.

The protein localises to the cell inner membrane. The catalysed reaction is a quinone + NADH + 5 H(+)(in) = a quinol + NAD(+) + 4 H(+)(out). Functionally, NDH-1 shuttles electrons from NADH, via FMN and iron-sulfur (Fe-S) centers, to quinones in the respiratory chain. The immediate electron acceptor for the enzyme in this species is believed to be a menaquinone. Couples the redox reaction to proton translocation (for every two electrons transferred, four hydrogen ions are translocated across the cytoplasmic membrane), and thus conserves the redox energy in a proton gradient. The protein is NADH-quinone oxidoreductase subunit N of Salinibacter ruber (strain DSM 13855 / M31).